Here is a 238-residue protein sequence, read N- to C-terminus: Pre-protein VI (238 aa).

The propeptide occupies 1 to 33 (MDAVNFSILAPRYGSHPMMSAWSGIGTSDMNGG). The amphipathic alpha-helix essential for membrane lytic activity stretch occupies residues 34–54 (AFNWGGIWSGIKNFGSNVKNW). The segment at 36 to 53 (NWGGIWSGIKNFGSNVKN) is involved in endosomal membrane lysis. The interval 48–74 (GSNVKNWGSRAWNSQTGKLLRQKLNDT) is interaction with hexon protein. The Nuclear export signal signature appears at 67-76 (LRQKLNDTKV). A PPXY motif motif is present at residues 153–156 (PPSY). The disordered stretch occupies residues 187–212 (TLELKPSDQPPPYSPQSSNMPVTAPV). Residues 219–230 (GTLANIVGVGLS) carry the Nuclear export signal motif. Residues 221 to 227 (LANIVGV) are interaction with hexon protein. Residues 228–238 (GLSNVKRRRCF) are binds to importin alpha/beta, involved in hexon nuclear import. Positions 233–236 (KRRR) match the Nuclear localization signal motif.

Belongs to the adenoviridae protein VI family. In terms of assembly, interacts with hexon protein; this interaction allows nuclear import of hexon trimers and possibly pre-capsid assembly. Interacts (via C-terminal NLS) with importin alpha/beta. As to quaternary structure, interacts (via PPxY motif) with host NEDD4 ubiquitine ligase; this interaction might play a role in virus intracellular transport during entry. Part of a complex composed of the core-capsid bridging protein, the endosome lysis protein VI and the hexon-linking protein VIII; these interactions bridge the virus core to the capsid. Interacts with peripentonal hexons; this interaction stabilizes the capsid by gluing two peripentonal hexons together and joining them with an adjacent group-of-nine hexon. Heterodimer with the viral protease; disulfide-linked. Interacts with the viral protease. In terms of processing, ubiquitinated by Nedd4 following partial capsid disassembly; which might play a role in intracellular virus movement during entry. Contains the major nuclear import and export signals. Proteolytically removed during virion maturation. The processing of the C-terminus turns the precursor into a mature viral structural protein and abrogates its ability to promote hexon import and act as a potential chaperone protein.

The protein localises to the host nucleus. It is found in the host cytoplasm. It localises to the virion. During virus assembly, promotes hexon trimers nuclear import through nuclear pore complexes via an importin alpha/beta-dependent mechanism. By analogy to herpesviruses capsid assembly, might act as a chaperone to promote the formation of the icosahedral capsid. Functionally, structural component of the virion that provides increased stability to the particle shell through its interaction with the core-capsid bridging protein and the hexon-linking protein VIII. Fibers shedding during virus entry into host cell allows the endosome lysis protein to be exposed as a membrane-lytic peptide. Exhibits pH-independent membrane fragmentation activity and probably mediates viral rapid escape from host endosome via organellar membrane lysis. It is not clear if it then remains partially associated with the capsid and involved in the intracellular microtubule-dependent transport of capsid to the nucleus, or if it is lost during endosomal penetration. Its function is as follows. Cofactor that activates the viral protease. Binds to viral protease in a 1:1 ratio. This chain is Pre-protein VI, found in Canis lupus familiaris (Dog).